Consider the following 377-residue polypeptide: MKNQALKILTLCVLVGSAMSLKLYAQKGLNHSEIEAKMIKALEWQEAHPIFALAPTDWTEGAYYIGVSRAHKTTQDMMYMAALKNQAYWNNWQTYSRLHHADDVAISYSYIYIGMNDKRPGFVNLEPTKKFLDAHLHEDDEWKAGTDKSASGKTILWWWCDALFMAPPVLNLYAKHTNQPKYRDEMHKYYMETYNQLYDKEERLFARDMRFVWKGTEKDLKEPNDKKIFWSRGNGWVLGGLALLLDDMPNDYKHRTFYENLFKDMASRILELQPKDGLWRTSLLSPETYDHGEVSGSGFYTFALAWGVNNGLLDRNKYEPAVKKAWKALADCQHEDGRVGWVQNIGASPEPASADSWQNFGTGAFLMAGSEVLKLEE.

Residues 1–25 (MKNQALKILTLCVLVGSAMSLKLYA) form the signal peptide. Asp-161 acts as the Proton donor in catalysis.

The protein belongs to the glycosyl hydrolase 105 family.

It localises to the periplasm. Its function is as follows. Unsaturated beta-glucuronyl hydrolase involved in ulvan degradation. Ulvan is the main polysaccharide component of the Ulvales (green seaweed) cell wall. It is composed of disaccharide building blocks comprising 3-sulfated rhamnose (Rha3S) linked to D-glucuronic acid (GlcA), L-iduronic acid (IduA), or D-xylose (Xyl). Unsaturated 3S-rhamnoglycuronyl hydrolase works together with ulvan lyases to fully degrade the ulvan polymer, catalyzing specifically the cleavage of the unsaturated 4-deoxy-L-threo-hex-4-enopyranosiduronic acid (deltaUA) of deltaUA-Rha3S disaccharides and deltaUA-Rha3S-Xyl-Rha3S tetrasaccharides, the end products of the ulvan lyase reaction. Also hydrolases deltaUA-Rha3S-IduA-Rha3S and deltaUA-Rha3S-GlcA-Rha3S tetrasaccharidestetrasaccharides. Prefers tetrasaccharides over disaccharides and prefers an uronic residue at subsite +2. This Formosa agariphila (strain DSM 15362 / KCTC 12365 / LMG 23005 / KMM 3901 / M-2Alg 35-1) protein is Unsaturated 3S-rhamnoglycuronyl hydrolase.